Consider the following 262-residue polypeptide: Proteasome subunit alpha (262 aa).

Residues 235–262 (LLPTTGESDAGDSGADGSPSGDSPDTSA) are disordered.

The protein belongs to the peptidase T1A family. As to quaternary structure, the 20S proteasome core is composed of 14 alpha and 14 beta subunits that assemble into four stacked heptameric rings, resulting in a barrel-shaped structure. The two inner rings, each composed of seven catalytic beta subunits, are sandwiched by two outer rings, each composed of seven alpha subunits. The catalytic chamber with the active sites is on the inside of the barrel. Has a gated structure, the ends of the cylinder being occluded by the N-termini of the alpha-subunits. Is capped by the proteasome-associated ATPase, ARC.

It localises to the cytoplasm. It participates in protein degradation; proteasomal Pup-dependent pathway. Its activity is regulated as follows. The formation of the proteasomal ATPase ARC-20S proteasome complex, likely via the docking of the C-termini of ARC into the intersubunit pockets in the alpha-rings, may trigger opening of the gate for substrate entry. Interconversion between the open-gate and close-gate conformations leads to a dynamic regulation of the 20S proteasome proteolysis activity. Its function is as follows. Component of the proteasome core, a large protease complex with broad specificity involved in protein degradation. The chain is Proteasome subunit alpha from Gordonia bronchialis (strain ATCC 25592 / DSM 43247 / BCRC 13721 / JCM 3198 / KCTC 3076 / NBRC 16047 / NCTC 10667) (Rhodococcus bronchialis).